A 395-amino-acid chain; its full sequence is Receptor-like cytoplasmic kinase 176 (395 aa).

Residues 1 to 45 (MGNCWGAKISSESPCRSASSPSGGTSKYASNSSVSAASVPPTPRS) form a disordered region. 2 stretches are compositionally biased toward low complexity: residues 10–22 (SSES…SSPS) and 29–39 (ASNSSVSAASV). In terms of domain architecture, Protein kinase spans 70–355 (FRPDSVLGEG…EQVVAVLEQL (286 aa)). ATP is bound by residues 76–84 (LGEGGFGSV) and K108. D205 acts as the Proton acceptor in catalysis. Residues 359-395 (KETGANPQLQKKSSSKNAGSNGSKPSSKGKPANARLV) are disordered. The segment covering 369–395 (KKSSSKNAGSNGSKPSSKGKPANARLV) has biased composition (low complexity).

This sequence belongs to the protein kinase superfamily. Ser/Thr protein kinase family. As to quaternary structure, interacts with CERK1.

It carries out the reaction L-seryl-[protein] + ATP = O-phospho-L-seryl-[protein] + ADP + H(+). It catalyses the reaction L-threonyl-[protein] + ATP = O-phospho-L-threonyl-[protein] + ADP + H(+). Functions downstream of CERK1 in the microbial peptidoglycans (PGNs) and fungal chitin signaling pathways that mediate innate immunity. Participates in the activation of defense genes during response to PGN and chitin. The chain is Receptor-like cytoplasmic kinase 176 from Oryza sativa subsp. japonica (Rice).